Reading from the N-terminus, the 296-residue chain is Diaminopimelate epimerase (296 aa).

Substrate-binding residues include N17, Q49, and N69. C78 (proton donor) is an active-site residue. Substrate-binding positions include 79 to 80, N171, N205, and 223 to 224; these read GN and ER. The active-site Proton acceptor is C232. A substrate-binding site is contributed by 233–234; the sequence is GT.

Belongs to the diaminopimelate epimerase family. In terms of assembly, homodimer.

It localises to the cytoplasm. It catalyses the reaction (2S,6S)-2,6-diaminopimelate = meso-2,6-diaminopimelate. It functions in the pathway amino-acid biosynthesis; L-lysine biosynthesis via DAP pathway; DL-2,6-diaminopimelate from LL-2,6-diaminopimelate: step 1/1. In terms of biological role, catalyzes the stereoinversion of LL-2,6-diaminopimelate (L,L-DAP) to meso-diaminopimelate (meso-DAP), a precursor of L-lysine and an essential component of the bacterial peptidoglycan. The polypeptide is Diaminopimelate epimerase (Methylorubrum extorquens (strain CM4 / NCIMB 13688) (Methylobacterium extorquens)).